A 475-amino-acid polypeptide reads, in one-letter code: Aspartyl/glutamyl-tRNA(Asn/Gln) amidotransferase subunit B (475 aa).

Belongs to the GatB/GatE family. GatB subfamily. As to quaternary structure, heterotrimer of A, B and C subunits.

The catalysed reaction is L-glutamyl-tRNA(Gln) + L-glutamine + ATP + H2O = L-glutaminyl-tRNA(Gln) + L-glutamate + ADP + phosphate + H(+). The enzyme catalyses L-aspartyl-tRNA(Asn) + L-glutamine + ATP + H2O = L-asparaginyl-tRNA(Asn) + L-glutamate + ADP + phosphate + 2 H(+). Functionally, allows the formation of correctly charged Asn-tRNA(Asn) or Gln-tRNA(Gln) through the transamidation of misacylated Asp-tRNA(Asn) or Glu-tRNA(Gln) in organisms which lack either or both of asparaginyl-tRNA or glutaminyl-tRNA synthetases. The reaction takes place in the presence of glutamine and ATP through an activated phospho-Asp-tRNA(Asn) or phospho-Glu-tRNA(Gln). In Chlorobium phaeobacteroides (strain BS1), this protein is Aspartyl/glutamyl-tRNA(Asn/Gln) amidotransferase subunit B.